Consider the following 697-residue polypeptide: Polyribonucleotide nucleotidyltransferase (697 aa).

Residues aspartate 489 and aspartate 495 each coordinate Mg(2+). A KH domain is found at 556-615 (PRIETIKIKPDKIREVIGSGGKVIRGITEATGVKIEIQDDGTINIASADPEATKKAIAMI). Positions 625–693 (GKTYKGRIVK…RSGRVKLSRK (69 aa)) constitute an S1 motif domain.

Belongs to the polyribonucleotide nucleotidyltransferase family. Mg(2+) serves as cofactor.

It localises to the cytoplasm. The enzyme catalyses RNA(n+1) + phosphate = RNA(n) + a ribonucleoside 5'-diphosphate. Its function is as follows. Involved in mRNA degradation. Catalyzes the phosphorolysis of single-stranded polyribonucleotides processively in the 3'- to 5'-direction. The chain is Polyribonucleotide nucleotidyltransferase from Bdellovibrio bacteriovorus (strain ATCC 15356 / DSM 50701 / NCIMB 9529 / HD100).